A 285-amino-acid chain; its full sequence is 4-diphosphocytidyl-2-C-methyl-D-erythritol kinase (285 aa).

Lys-12 is an active-site residue. 95 to 105 (PMGGGVGGGSS) provides a ligand contact to ATP. The active site involves Asp-137.

Belongs to the GHMP kinase family. IspE subfamily.

The enzyme catalyses 4-CDP-2-C-methyl-D-erythritol + ATP = 4-CDP-2-C-methyl-D-erythritol 2-phosphate + ADP + H(+). The protein operates within isoprenoid biosynthesis; isopentenyl diphosphate biosynthesis via DXP pathway; isopentenyl diphosphate from 1-deoxy-D-xylulose 5-phosphate: step 3/6. Its function is as follows. Catalyzes the phosphorylation of the position 2 hydroxy group of 4-diphosphocytidyl-2C-methyl-D-erythritol. The sequence is that of 4-diphosphocytidyl-2-C-methyl-D-erythritol kinase from Actinobacillus pleuropneumoniae serotype 7 (strain AP76).